The primary structure comprises 384 residues: Chaperone protein DnaJ (384 aa).

The 66-residue stretch at 6–71 (DYYEVLGISK…TKRKTYDQFG (66 aa)) folds into the J domain. The CR-type zinc-finger motif lies at 141–223 (GKKMSIKVNR…CHGTGNTRKV (83 aa)). Residues C154, C157, C171, C174, C197, C200, C211, and C214 each coordinate Zn(2+). CXXCXGXG motif repeat units lie at residues 154–161 (CEECNGTG), 171–178 (CSTCNGTG), 197–204 (CSACNGTG), and 211–218 (CSKCHGTG).

It belongs to the DnaJ family. As to quaternary structure, homodimer. The cofactor is Zn(2+).

Its subcellular location is the cytoplasm. In terms of biological role, participates actively in the response to hyperosmotic and heat shock by preventing the aggregation of stress-denatured proteins and by disaggregating proteins, also in an autonomous, DnaK-independent fashion. Unfolded proteins bind initially to DnaJ; upon interaction with the DnaJ-bound protein, DnaK hydrolyzes its bound ATP, resulting in the formation of a stable complex. GrpE releases ADP from DnaK; ATP binding to DnaK triggers the release of the substrate protein, thus completing the reaction cycle. Several rounds of ATP-dependent interactions between DnaJ, DnaK and GrpE are required for fully efficient folding. Also involved, together with DnaK and GrpE, in the DNA replication of plasmids through activation of initiation proteins. The protein is Chaperone protein DnaJ of Clostridioides difficile (strain 630) (Peptoclostridium difficile).